The sequence spans 869 residues: Histone deacetylase 4 (869 aa).

Disordered stretches follow at residues 1 to 25 (MEEASSSTGSAGGAGPSVPNLPSTS), 128 to 167 (SSSNGNLSVPQTPTKEHHPTAPTSNRKCDLPRSNSTTISQ), and 180 to 218 (RSKGESNSQSNLMSNSVTANGNGHDNGRKLKNSNSQVNV). Positions 184–202 (ESNSQSNLMSNSVTANGNG) are enriched in polar residues. S251 is subject to Phosphoserine. The interval 460–802 (CTTGLGYDQA…VQALIGESDD (343 aa)) is histone deacetylase. The active site involves H608.

It belongs to the histone deacetylase family. HD type 2 subfamily. Interacts with mef-2. Phosphorylated by serine/threonine-protein kinase kin-29 at Ser-251; the phosphorylation inhibits repression of transcription by mef-2. May be phosphorylated by either cyclic-AMP dependent or cyclic-GMP dependent protein kinases. In terms of tissue distribution, expressed in body-wall muscle cells, hypodermal seam cells and neuronal cells including sensory amphid neuronal processes, the nerve ring, ventral nerve cords and motor neuronal commissures.

It is found in the nucleus. It catalyses the reaction N(6)-acetyl-L-lysyl-[histone] + H2O = L-lysyl-[histone] + acetate. Its function is as follows. Responsible for the deacetylation of lysine residues on the N-terminal part of the core histones (H2A, H2B, H3 and H4). Histone deacetylation gives a tag for epigenetic repression and plays an important role in transcriptional regulation, cell cycle progression and developmental events. Histone deacetylases act via the formation of large multiprotein complexes. Involved in transduction of sensory signals, together with egl-4, kin-29 and mef-2; binding to transcription factor mef-2 enables negative modulation of chemoreceptor gene expression in chemosensory neurons. May be involved in muscle development. This is Histone deacetylase 4 (hda-4) from Caenorhabditis elegans.